A 426-amino-acid chain; its full sequence is Enolase (426 aa).

Gln163 serves as a coordination point for (2R)-2-phosphoglycerate. Glu205 (proton donor) is an active-site residue. Mg(2+) contacts are provided by Asp242, Glu286, and Asp313. Positions 338, 367, 368, and 389 each coordinate (2R)-2-phosphoglycerate. The Proton acceptor role is filled by Lys338.

Belongs to the enolase family. It depends on Mg(2+) as a cofactor.

Its subcellular location is the cytoplasm. The protein localises to the secreted. The protein resides in the cell surface. It catalyses the reaction (2R)-2-phosphoglycerate = phosphoenolpyruvate + H2O. It functions in the pathway carbohydrate degradation; glycolysis; pyruvate from D-glyceraldehyde 3-phosphate: step 4/5. Functionally, catalyzes the reversible conversion of 2-phosphoglycerate (2-PG) into phosphoenolpyruvate (PEP). It is essential for the degradation of carbohydrates via glycolysis. This chain is Enolase, found in Syntrophobacter fumaroxidans (strain DSM 10017 / MPOB).